The following is a 446-amino-acid chain: tRNA-2-methylthio-N(6)-dimethylallyladenosine synthase (446 aa).

An MTTase N-terminal domain is found at 3–120; the sequence is KKLFIETHGC…LPEMIDAARS (118 aa). Positions 12, 49, 83, 157, 161, and 164 each coordinate [4Fe-4S] cluster. Residues 143–375 enclose the Radical SAM core domain; that stretch reads RVDGPTAFVS…QGRIHQQGYE (233 aa). Residues 378-442 form the TRAM domain; sequence RRMVGSTQRI…PHSLRGTLIE (65 aa).

It belongs to the methylthiotransferase family. MiaB subfamily. As to quaternary structure, monomer. Requires [4Fe-4S] cluster as cofactor.

It is found in the cytoplasm. It carries out the reaction N(6)-dimethylallyladenosine(37) in tRNA + (sulfur carrier)-SH + AH2 + 2 S-adenosyl-L-methionine = 2-methylsulfanyl-N(6)-dimethylallyladenosine(37) in tRNA + (sulfur carrier)-H + 5'-deoxyadenosine + L-methionine + A + S-adenosyl-L-homocysteine + 2 H(+). Functionally, catalyzes the methylthiolation of N6-(dimethylallyl)adenosine (i(6)A), leading to the formation of 2-methylthio-N6-(dimethylallyl)adenosine (ms(2)i(6)A) at position 37 in tRNAs that read codons beginning with uridine. This chain is tRNA-2-methylthio-N(6)-dimethylallyladenosine synthase, found in Pseudomonas paraeruginosa (strain DSM 24068 / PA7) (Pseudomonas aeruginosa (strain PA7)).